The following is a 438-amino-acid chain: Adenosylhomocysteinase (438 aa).

Substrate is bound by residues T61, D137, and E162. T163 to T165 serves as a coordination point for NAD(+). 2 residues coordinate substrate: K192 and D196. NAD(+) is bound by residues N197, G226–G231, E249, N284, I305–H307, and N352.

The protein belongs to the adenosylhomocysteinase family. The cofactor is NAD(+).

The protein resides in the cytoplasm. The catalysed reaction is S-adenosyl-L-homocysteine + H2O = L-homocysteine + adenosine. The protein operates within amino-acid biosynthesis; L-homocysteine biosynthesis; L-homocysteine from S-adenosyl-L-homocysteine: step 1/1. Its function is as follows. May play a key role in the regulation of the intracellular concentration of adenosylhomocysteine. This is Adenosylhomocysteinase from Flavobacterium johnsoniae (strain ATCC 17061 / DSM 2064 / JCM 8514 / BCRC 14874 / CCUG 350202 / NBRC 14942 / NCIMB 11054 / UW101) (Cytophaga johnsonae).